The following is a 273-amino-acid chain: Cytosolic sulfotransferase 4 (273 aa).

Position 74–79 (74–79 (KCGTTW)) interacts with 3'-phosphoadenylyl sulfate. The Proton acceptor role is filled by H121. 3'-phosphoadenylyl sulfate-binding positions include R143 and 239 to 241 (RKG).

The protein belongs to the sulfotransferase 1 family.

Its subcellular location is the cytoplasm. Its function is as follows. Sulfotransferase that utilizes 3'-phospho-5'-adenylyl sulfate (PAPS) as sulfonate donor. The polypeptide is Cytosolic sulfotransferase 4 (SOT4) (Arabidopsis thaliana (Mouse-ear cress)).